Here is a 266-residue protein sequence, read N- to C-terminus: uncharacterized protein (266 aa).

4 helical membrane passes run 9 to 29 (IFIIFLSFLMIVLSITSIELP), 79 to 99 (GIMTCMGINILSLVIILINPF), 122 to 142 (LSVMIVIFYILSTTIGLMLSG), and 193 to 213 (GWYLSIVLLFLSLILAVMVFI).

It is found in the membrane. This is an uncharacterized protein from Dictyostelium discoideum (Social amoeba).